Here is a 205-residue protein sequence, read N- to C-terminus: Small ribosomal subunit protein uS4 (205 aa).

The region spanning 95–156 is the S4 RNA-binding domain; that stretch reads SRLDNIVYRM…KTIKIPIVKA (62 aa).

Belongs to the universal ribosomal protein uS4 family. Part of the 30S ribosomal subunit. Contacts protein S5. The interaction surface between S4 and S5 is involved in control of translational fidelity.

In terms of biological role, one of the primary rRNA binding proteins, it binds directly to 16S rRNA where it nucleates assembly of the body of the 30S subunit. Its function is as follows. With S5 and S12 plays an important role in translational accuracy. The sequence is that of Small ribosomal subunit protein uS4 from Mycoplasma pneumoniae (strain ATCC 29342 / M129 / Subtype 1) (Mycoplasmoides pneumoniae).